Consider the following 226-residue polypeptide: Neuromodulin (226 aa).

The segment at 1 to 226 (MLCCMRRTKQ…EDPEADQEHA (226 aa)) is disordered. Residues Cys-3 and Cys-4 are each lipidated (S-palmitoyl cysteine). The segment covering 9–32 (KQVEKNDEDQKIEQDGVKPEDKAH) has biased composition (basic and acidic residues). The region spanning 31–60 (AHKAATKIQASFRGHITRKKLKDEKKGDAP) is the IQ domain. A Phosphoserine; by PHK and PKC modification is found at Ser-41. Residues 51–84 (LKDEKKGDAPAAEAEAKEKDDAPVADGVEKKEGD) show a composition bias toward basic and acidic residues. The segment covering 85–97 (GSATTDAAPATSP) has biased composition (low complexity). A phosphoserine mark is found at Ser-86 and Ser-96. Residues 98–127 (KAEEPSKAGDAPSEEKKGEGDAAPSEEKAG) are compositionally biased toward basic and acidic residues. The span at 128–139 (SAETESAAKATT) shows a compositional bias: low complexity. Phosphoserine occurs at positions 142, 144, and 145. The span at 146-158 (KAEDGPAKEEPKQ) shows a compositional bias: basic and acidic residues. Residues 159–192 (ADVPAAVTDAAATTPAAEDAAKAAQPPTETAESS) are compositionally biased toward low complexity. Thr-172 carries the post-translational modification Phosphothreonine. Phosphoserine occurs at positions 191 and 192. Residues 201–214 (VDEAKPKESARQDE) are compositionally biased toward basic and acidic residues. Residues 215–226 (GKEDPEADQEHA) show a composition bias toward acidic residues.

This sequence belongs to the neuromodulin family. In terms of assembly, identified in a complex containing FGFR4, NCAM1, CDH2, PLCG1, FRS2, SRC, SHC1, GAP43 and CTTN. Interacts (via IQ domain) with calmodulin. Binds calmodulin with a greater affinity in the absence of Ca(2+) than in its presence. Phosphorylated. Phosphorylation of this protein by a protein kinase C is specifically correlated with certain forms of synaptic plasticity. In terms of processing, palmitoylated by ZDHHC3. Palmitoylation is regulated by ARF6 and is essential for plasma membrane association and axonal and dendritic filopodia induction. Deacylated by LYPLA2. As to expression, expressed in hippocampal neurons, with highest levels of expression in the CA4 and CA3 neurons and lower levels in CA1 neurons. Expressed in the dorsal root ganglion.

It is found in the cell membrane. Its subcellular location is the cell projection. It localises to the growth cone. The protein resides in the growth cone membrane. The protein localises to the synapse. It is found in the filopodium membrane. Its subcellular location is the perikaryon. It localises to the dendrite. The protein resides in the axon. The protein localises to the cytoplasm. This protein is associated with nerve growth. It is a major component of the motile 'growth cones' that form the tips of elongating axons. Plays a role in axonal and dendritic filopodia induction. The chain is Neuromodulin (Gap43) from Rattus norvegicus (Rat).